Reading from the N-terminus, the 547-residue chain is MAAKDVKFGNDARVKMLAGVNVLADAVKVTLGPKGRNVILDKSFGAPTITKDGVSVAREIELEDKFENMGAQMVKEVASKANDAAGDGTTTATVLAQAIVNEGLKAVAAGMNPMDLKRGIDKAVAAVVSELKALSKPCETSKEIEQVGTISANSDSIVGQLIAQAMEKVGKEGVITVEDGTGLEDELDVVEGMQFDRGYLSPYFINKPETATVEMDNPYILLVDKKISNIRELLPVLEAVAKAGKPLLIIAEDVEGEALATLVVNTMRGIVKVAAVKAPGFGDRRKAMLQDIAILTAGTVISEEIGMELEKAALEDLGQAKRVVINKDNTTIIDGVGDEAQIKGRVAQIRQQIEESTSDYDKEKLQERVAKLAGGVAVIKVGAATEVEMKEKKDRVEDALHATRAAVEEGIVAGGGVALIRAASKAAANLQGDNEEQNVGIKLALRAMEAPLRQIVANAGEEASVVASAVKNGEGNYGYNAGTEEYGDMIAMGILDPTKVTRSALQFAASIAGLMITTEAMVTELPKDDKLDPSAAMGGMGGMGGMM.

Residues 30–33 (TLGP), K51, 87–91 (DGTTT), G415, and D496 each bind ATP.

Belongs to the chaperonin (HSP60) family. In terms of assembly, forms a cylinder of 14 subunits composed of two heptameric rings stacked back-to-back. Interacts with the co-chaperonin GroES.

Its subcellular location is the cytoplasm. It carries out the reaction ATP + H2O + a folded polypeptide = ADP + phosphate + an unfolded polypeptide.. Together with its co-chaperonin GroES, plays an essential role in assisting protein folding. The GroEL-GroES system forms a nano-cage that allows encapsulation of the non-native substrate proteins and provides a physical environment optimized to promote and accelerate protein folding. This is Chaperonin GroEL from Actinobacillus succinogenes (strain ATCC 55618 / DSM 22257 / CCUG 43843 / 130Z).